We begin with the raw amino-acid sequence, 300 residues long: GTPase Era (300 aa).

The Era-type G domain maps to 6 to 173 (HSGFVAILGR…IESLVNTLPE (168 aa)). Positions 14–21 (GRPNVGKS) are G1. A GTP-binding site is contributed by 14–21 (GRPNVGKS). The tract at residues 40-44 (QTTRN) is G2. The interval 61–64 (DTPG) is G3. GTP is bound by residues 61–65 (DTPGI) and 123–126 (NKID). The tract at residues 123 to 126 (NKID) is G4. Residues 152-154 (ISA) are G5. The region spanning 204–281 (TREEVPHSVA…YLELWVKVQP (78 aa)) is the KH type-2 domain.

This sequence belongs to the TRAFAC class TrmE-Era-EngA-EngB-Septin-like GTPase superfamily. Era GTPase family. As to quaternary structure, monomer.

Its subcellular location is the cytoplasm. It is found in the cell membrane. Its function is as follows. An essential GTPase that binds both GDP and GTP, with rapid nucleotide exchange. Plays a role in 16S rRNA processing and 30S ribosomal subunit biogenesis and possibly also in cell cycle regulation and energy metabolism. The chain is GTPase Era from Ligilactobacillus salivarius (strain UCC118) (Lactobacillus salivarius).